The chain runs to 427 residues: Dihydroorotase (427 aa).

His58 and His60 together coordinate Zn(2+). Residues 60–62 and Asn92 each bind substrate; that span reads HYR. Positions 150, 177, and 230 each coordinate Zn(2+). Residue Asn276 coordinates substrate. Asp303 serves as a coordination point for Zn(2+). The active site involves Asp303. Residues His307 and 321–322 each bind substrate; that span reads FG.

Belongs to the metallo-dependent hydrolases superfamily. DHOase family. Class I DHOase subfamily. Zn(2+) is required as a cofactor.

It carries out the reaction (S)-dihydroorotate + H2O = N-carbamoyl-L-aspartate + H(+). Its pathway is pyrimidine metabolism; UMP biosynthesis via de novo pathway; (S)-dihydroorotate from bicarbonate: step 3/3. Catalyzes the reversible cyclization of carbamoyl aspartate to dihydroorotate. This chain is Dihydroorotase, found in Lactobacillus leichmannii.